A 457-amino-acid polypeptide reads, in one-letter code: Sensor protein CpxA (457 aa).

Over 1-7 (MIGSLTA) the chain is Cytoplasmic. A helical membrane pass occupies residues 8 to 29 (RIFAIFWLTLALVLMLVLMLPK). Residues 30–163 (LDSRQMTELL…SDFINLLFDR (134 aa)) lie on the Periplasmic side of the membrane. A helical transmembrane segment spans residues 164-184 (PLLLLIVTMLVSTPLLLWLAW). Residues 185-237 (SLAKPARKLKNAADEVAQGNLRQHPELEAGPQEFLAAGASFNQMVTALERMMT) enclose the HAMP domain. The Cytoplasmic segment spans residues 185–457 (SLAKPARKLK…VIWLPLYKRS (273 aa)). One can recognise a Histidine kinase domain in the interval 245 to 455 (DISHELRTPL…RLVIWLPLYK (211 aa)). Phosphohistidine; by autocatalysis is present on histidine 248.

The protein resides in the cell inner membrane. It carries out the reaction ATP + protein L-histidine = ADP + protein N-phospho-L-histidine.. Functionally, this protein is involved in several diverse cellular processes, such as the functioning of acetohydroxyacid synthetase I, in the biosynthesis of isoleucine and valine, the TraJ protein activation activity for tra gene expression in F plasmid, and the synthesis, translocation, or stability of cell envelope proteins. Activates CpxR by phosphorylation. The sequence is that of Sensor protein CpxA (cpxA) from Escherichia coli O157:H7.